The chain runs to 404 residues: Glucose-1-phosphate adenylyltransferase (404 aa).

Alpha-D-glucose 1-phosphate is bound by residues Tyr99, Gly164, Glu179–Lys180, and Ser197.

This sequence belongs to the bacterial/plant glucose-1-phosphate adenylyltransferase family. In terms of assembly, homotetramer.

It catalyses the reaction alpha-D-glucose 1-phosphate + ATP + H(+) = ADP-alpha-D-glucose + diphosphate. It participates in glycan biosynthesis; glycogen biosynthesis. Its function is as follows. Involved in the biosynthesis of ADP-glucose, a building block required for the elongation reactions to produce glycogen. Catalyzes the reaction between ATP and alpha-D-glucose 1-phosphate (G1P) to produce pyrophosphate and ADP-Glc. The protein is Glucose-1-phosphate adenylyltransferase of Rhodococcus erythropolis (strain PR4 / NBRC 100887).